Here is a 264-residue protein sequence, read N- to C-terminus: Thymidylate synthase (264 aa).

Arg-21 is a binding site for dUMP. His-51 contacts (6R)-5,10-methylene-5,6,7,8-tetrahydrofolate. 126-127 lines the dUMP pocket; sequence RR. The Nucleophile role is filled by Cys-146. Residues 166-169, Asn-177, and 207-209 contribute to the dUMP site; these read RSAD and HLY. Asp-169 is a (6R)-5,10-methylene-5,6,7,8-tetrahydrofolate binding site. Ser-263 lines the (6R)-5,10-methylene-5,6,7,8-tetrahydrofolate pocket.

This sequence belongs to the thymidylate synthase family. Bacterial-type ThyA subfamily. Homodimer.

Its subcellular location is the cytoplasm. The catalysed reaction is dUMP + (6R)-5,10-methylene-5,6,7,8-tetrahydrofolate = 7,8-dihydrofolate + dTMP. The protein operates within pyrimidine metabolism; dTTP biosynthesis. Catalyzes the reductive methylation of 2'-deoxyuridine-5'-monophosphate (dUMP) to 2'-deoxythymidine-5'-monophosphate (dTMP) while utilizing 5,10-methylenetetrahydrofolate (mTHF) as the methyl donor and reductant in the reaction, yielding dihydrofolate (DHF) as a by-product. This enzymatic reaction provides an intracellular de novo source of dTMP, an essential precursor for DNA biosynthesis. This chain is Thymidylate synthase, found in Neisseria meningitidis serogroup C / serotype 2a (strain ATCC 700532 / DSM 15464 / FAM18).